The sequence spans 1223 residues: MNSILSRLFRDVTGDEEYAVNSLRDANRLIIIDTDTGTRRLLEHVSNFRRFLNTIRSDAAGACARHQRAARHDDEEEAPPAARVSFAGHSLVLENNDFCVFVKPFLLKRHYDEIKNYLKLDRFFKSDNPEHTNMCVQAGDYCYWPNWPASQAVSFTGWQLYLYVEFGIVVESTVPIIHNRRLGPVDLFVFNPRTFLNIEMNLSTNEAPPVKLFVNGKFDFEKKVAESGKAVESLFEIKMANGATATCKMIANLVNSNKNLFEVIRDNINLEECVTTPKYRHIIDVNLTKLRQFAHDGAVLAPPVERAFRAPTVTTILSASSENAEVIQSEIDAALVKVREGMVKVMAEFNRSDDPDLLQAYFKESGFKNFHFLLFNVWKQITKRDKKSFRETDMKLFFELVCETLFGNDSDALATALVKCEPFTTRGVATFNSLCDHWHCFKGVNPYTLLGSYYGAHYFIYLKLTSSDAHECDDPWAFNYKNAMECKVPPKALGEAFFIKVENVVTQVTLVFNGEHYQIVKKDDELYKLVETNPYKLQNIKFNNWKYMYHTKYGVYNVVTDDFYSNCPFLLGTTMPGTFKRPDDPPYLPEAVFAHMLATSAEERDILRTYHIAKLCRDVKMVKVNLGTVNLLGDCAPCKLDARLRLNDLFRELWNLDDDSLVTLALYVNKLRVEDIVHNFKCGACRASVQERKCRCVQKIKINRQALKTCLIFDLFVGDPELTQLMWMLIFATNKLYINTALIVTTSKLVAQHAHFFTKEHIKIAAILHRDLHKIEFVDTLMADVCNHDAFLAYLQHAVANEPAAAPAADNAVAKFYAHYANAANILHKYKNLWWDKIILARDSDTLSSWLTRFYLRVILSKMDVQNYPVAYLTQVVEGYLYFKRYTNFNHASSYMLMHFAASLSVPTDYGRKAVYLPGVPLSGKSTFFELLDFLVLMHKFDDDTHTGASKETSDKEVSNLNSEVYTINELKKCSESFFKKHADSSKSDSKSRKYQGLLKYEANYKMLIVNNNPLYVDDYDDGVQNRFLIVYTDHKFLPHVRFSGSVYHHILTKQYPQEPMVVDALKDSVRVFLAHVVRYQREPQTGLVPYKTLLDSDPVHQHNLTRLSVNNSPMYAVIYILNIKTAPRSANTFVTEEKMQEMIGYATLHLKSFLHPSFTQYNAAKNINAGTARSFVFDEKILLQQIKDKFKNNYDERGCKFNNLTMALNKLDININVPQFKC.

The Nuclear localization signal motif lies at 692–701 (RKCRCVQKIK). 919-926 (GVPLSGKS) contacts ATP. Positions 967-981 (TINELKKCSESFFKK) form a DNA-binding region, H-T-H motif.

It localises to the host nucleus. The catalysed reaction is ATP + H2O = ADP + phosphate + H(+). Functionally, essential for the initiation of viral DNA replication, it may contribute to other functions such as controlling the switch to the late phase and leading to the inhibition of host protein synthesis. Required for late and very late gene expression. The polypeptide is ATP-dependent DNA helicase P143 (P143) (Orgyia pseudotsugata multicapsid polyhedrosis virus (OpMNPV)).